A 164-amino-acid polypeptide reads, in one-letter code: Peptide deformylase (164 aa).

C87 and H129 together coordinate Fe cation. The active site involves E130. H133 contacts Fe cation.

It belongs to the polypeptide deformylase family. The cofactor is Fe(2+).

The enzyme catalyses N-terminal N-formyl-L-methionyl-[peptide] + H2O = N-terminal L-methionyl-[peptide] + formate. Its function is as follows. Removes the formyl group from the N-terminal Met of newly synthesized proteins. Requires at least a dipeptide for an efficient rate of reaction. N-terminal L-methionine is a prerequisite for activity but the enzyme has broad specificity at other positions. This is Peptide deformylase from Thermotoga petrophila (strain ATCC BAA-488 / DSM 13995 / JCM 10881 / RKU-1).